A 278-amino-acid chain; its full sequence is Probable septum site-determining protein MinC (278 aa).

Residues 104-167 are disordered; sequence RTQQSVDPAP…ASHTPAAPQS (64 aa).

It belongs to the MinC family. As to quaternary structure, interacts with MinD and FtsZ.

Its function is as follows. Cell division inhibitor that blocks the formation of polar Z ring septums. Rapidly oscillates between the poles of the cell to destabilize FtsZ filaments that have formed before they mature into polar Z rings. Prevents FtsZ polymerization. The polypeptide is Probable septum site-determining protein MinC (Bordetella avium (strain 197N)).